Here is a 346-residue protein sequence, read N- to C-terminus: Biotin synthase (346 aa).

A Radical SAM core domain is found at 38 to 256 (RQVQVSTLLS…IAVARIMMPT (219 aa)). The [4Fe-4S] cluster site is built by Cys53, Cys57, and Cys60. 4 residues coordinate [2Fe-2S] cluster: Cys97, Cys128, Cys188, and Arg260.

This sequence belongs to the radical SAM superfamily. Biotin synthase family. In terms of assembly, homodimer. [4Fe-4S] cluster is required as a cofactor. It depends on [2Fe-2S] cluster as a cofactor.

The catalysed reaction is (4R,5S)-dethiobiotin + (sulfur carrier)-SH + 2 reduced [2Fe-2S]-[ferredoxin] + 2 S-adenosyl-L-methionine = (sulfur carrier)-H + biotin + 2 5'-deoxyadenosine + 2 L-methionine + 2 oxidized [2Fe-2S]-[ferredoxin]. Its pathway is cofactor biosynthesis; biotin biosynthesis; biotin from 7,8-diaminononanoate: step 2/2. Functionally, catalyzes the conversion of dethiobiotin (DTB) to biotin by the insertion of a sulfur atom into dethiobiotin via a radical-based mechanism. This chain is Biotin synthase, found in Cronobacter sakazakii (strain ATCC BAA-894) (Enterobacter sakazakii).